The chain runs to 1081 residues: MDGDADAVKSGRHGSGQACQICGDGVGTTAEGDVFAACDVCGFPVCRPCYEYERKDGTQACPQCKTKYKRHKGSPAIRGEEGEDTDADDVSDYNYPASGSADQKQKIADRMRSWRMNAGGGGDVGRPKYDSGEIGLTKYDSGEIPRGYIPSVTNSQISGEIPGASPDHHMMSPTGNIGKRAPFPYVNHSPNPSREFSGSIGNVAWKERVDGWKLKQDKGAIPMTNGTSIAPSEGRGVGDIDASTDYNMEDALLNDETRQPLSRKVPLPSSRINPYRMVIVLRLVVLSIFLHYRITNPVRNAYPLWLLSVICEIWFALSWILDQFPKWFPINRETYLDRLALRYDREGEPSQLAAVDIFVSTVDPMKEPPLVTANTVLSILAVDYPVDKVSCYVSDDGAAMLTFDALAETSEFARKWVPFVKKYNIEPRAPEWYFSQKIDYLKDKVHPSFVKDRRAMKREYEEFKVRINGLVAKAQKVPEEGWIMQDGTPWPGNNTRDHPGMIQVFLGHSGGLDTEGNELPRLVYVSREKRPGFQHHKKAGAMNALVRVSAVLTNGQYMLNLDCDHYINNSKALREAMCFLMDPNLGRSVCYVQFPQRFDGIDRNDRYANRNTVFFDINLRGLDGIQGPVYVGTGCVFNRTALYGYEPPIKQKKKGSFLSSLCGGRKKASKSKKKSSDKKKSNKHVDSAVPVFNLEDIEEGVEGAGFDDEKSLLMSQMSLEKRFGQSAAFVASTLMEYGGVPQSATPESLLKEAIHVISCGYEDKTEWGTEIGWIYGSVTEDILTGFKMHARGWRSIYCMPKRPAFKGSAPINLSDRLNQVLRWALGSVEILFSRHCPIWYGYGGRLKFLERFAYINTTIYPLTSIPLLIYCVLPAICLLTGKFIIPEISNFASIWFISLFISIFATGILEMRWSGVGIDEWWRNEQFWVIGGISAHLFAVFQGLLKVLAGIDTNFTVTSKASDEDGDFAELYMFKWTTLLIPPTTILIINLVGVVAGISYAINSGYQSWGPLFGKLFFAFWVIVHLYPFLKGLMGRQNRTPTIVVVWAILLASIFSLLWVRIDPFTTRVTGPDTQTCGINC.

The Cytoplasmic segment spans residues 1 to 277 (MDGDADAVKS…PSSRINPYRM (277 aa)). Positions 19, 22, 38, 41, 46, 49, 61, and 64 each coordinate Zn(2+). The RING-type; degenerate zinc-finger motif lies at 19–65 (CQICGDGVGTTAEGDVFAACDVCGFPVCRPCYEYERKDGTQACPQCK). The disordered stretch occupies residues 72–148 (KGSPAIRGEE…YDSGEIPRGY (77 aa)). Residues 81-91 (EGEDTDADDVS) show a composition bias toward acidic residues. The segment covering 103–112 (QKQKIADRMR) has biased composition (basic and acidic residues). Residues 278 to 298 (VIVLRLVVLSIFLHYRITNPV) traverse the membrane as a helical segment. Residues 299–300 (RN) are Extracellular-facing. Residues 301–321 (AYPLWLLSVICEIWFALSWIL) form a helical membrane-spanning segment. Over 322–864 (DQFPKWFPIN…INTTIYPLTS (543 aa)) the chain is Cytoplasmic. Residues Ser360, Lys366, Glu367, and Asp396 each contribute to the UDP-alpha-D-glucose site. Asp396 is a catalytic residue. The stretch at 450–477 (VKDRRAMKREYEEFKVRINGLVAKAQKV) forms a coiled coil. Position 537 (Lys537) interacts with UDP-alpha-D-glucose. Mn(2+) contacts are provided by Lys538 and Asp562. A disordered region spans residues 660–684 (SLCGGRKKASKSKKKSSDKKKSNKH). The span at 664–682 (GRKKASKSKKKSSDKKKSN) shows a compositional bias: basic residues. Asp781 is a catalytic residue. The chain crosses the membrane as a helical span at residues 865–885 (IPLLIYCVLPAICLLTGKFII). Over 886 to 890 (PEISN) the chain is Extracellular. Residues 891–911 (FASIWFISLFISIFATGILEM) form a helical membrane-spanning segment. The Cytoplasmic portion of the chain corresponds to 912-926 (RWSGVGIDEWWRNEQ). A helical membrane pass occupies residues 927–947 (FWVIGGISAHLFAVFQGLLKV). The Extracellular segment spans residues 948 to 977 (LAGIDTNFTVTSKASDEDGDFAELYMFKWT). N-linked (GlcNAc...) asparagine glycosylation is present at Asn954. Residues 978–998 (TLLIPPTTILIINLVGVVAGI) traverse the membrane as a helical segment. Topologically, residues 999–1009 (SYAINSGYQSW) are cytoplasmic. The chain crosses the membrane as a helical span at residues 1010–1030 (GPLFGKLFFAFWVIVHLYPFL). At 1031–1039 (KGLMGRQNR) the chain is on the extracellular side. The helical transmembrane segment at 1040 to 1060 (TPTIVVVWAILLASIFSLLWV) threads the bilayer. Over 1061-1081 (RIDPFTTRVTGPDTQTCGINC) the chain is Cytoplasmic.

Belongs to the glycosyltransferase 2 family. Plant cellulose synthase subfamily. The cofactor is Mn(2+). Zn(2+) serves as cofactor.

Its subcellular location is the cell membrane. It carries out the reaction [(1-&gt;4)-beta-D-glucosyl](n) + UDP-alpha-D-glucose = [(1-&gt;4)-beta-D-glucosyl](n+1) + UDP + H(+). Its pathway is glycan metabolism; plant cellulose biosynthesis. Functionally, probable catalytic subunit of cellulose synthase terminal complexes ('rosettes'), required for beta-1,4-glucan microfibril crystallization, a major mechanism of the cell wall formation. The polypeptide is Probable cellulose synthase A catalytic subunit 8 [UDP-forming] (CESA8) (Oryza sativa subsp. japonica (Rice)).